Consider the following 351-residue polypeptide: Spermidine/putrescine import ATP-binding protein PotA (351 aa).

The region spanning Leu-6 to Ile-236 is the ABC transporter domain. Gly-38–Thr-45 lines the ATP pocket.

It belongs to the ABC transporter superfamily. Spermidine/putrescine importer (TC 3.A.1.11.1) family. The complex is composed of two ATP-binding proteins (PotA), two transmembrane proteins (PotB and PotC) and a solute-binding protein (PotD).

The protein resides in the cell membrane. It catalyses the reaction ATP + H2O + polyamine-[polyamine-binding protein]Side 1 = ADP + phosphate + polyamineSide 2 + [polyamine-binding protein]Side 1.. Functionally, part of the ABC transporter complex PotABCD involved in spermidine/putrescine import. Responsible for energy coupling to the transport system. The polypeptide is Spermidine/putrescine import ATP-binding protein PotA (Mycoplasma mycoides subsp. mycoides SC (strain CCUG 32753 / NCTC 10114 / PG1)).